The sequence spans 225 residues: NAD(P)H-quinone oxidoreductase subunit K, chloroplastic (225 aa).

Residues C43, C44, C108, and C139 each contribute to the [4Fe-4S] cluster site.

The protein belongs to the complex I 20 kDa subunit family. As to quaternary structure, NDH is composed of at least 16 different subunits, 5 of which are encoded in the nucleus. It depends on [4Fe-4S] cluster as a cofactor.

It localises to the plastid. Its subcellular location is the chloroplast thylakoid membrane. The enzyme catalyses a plastoquinone + NADH + (n+1) H(+)(in) = a plastoquinol + NAD(+) + n H(+)(out). The catalysed reaction is a plastoquinone + NADPH + (n+1) H(+)(in) = a plastoquinol + NADP(+) + n H(+)(out). Functionally, NDH shuttles electrons from NAD(P)H:plastoquinone, via FMN and iron-sulfur (Fe-S) centers, to quinones in the photosynthetic chain and possibly in a chloroplast respiratory chain. The immediate electron acceptor for the enzyme in this species is believed to be plastoquinone. Couples the redox reaction to proton translocation, and thus conserves the redox energy in a proton gradient. This Agrostis stolonifera (Creeping bentgrass) protein is NAD(P)H-quinone oxidoreductase subunit K, chloroplastic.